Here is an 88-residue protein sequence, read N- to C-terminus: Small ribosomal subunit protein uS15 (88 aa).

The protein belongs to the universal ribosomal protein uS15 family. In terms of assembly, part of the 30S ribosomal subunit. Forms a bridge to the 50S subunit in the 70S ribosome, contacting the 23S rRNA.

One of the primary rRNA binding proteins, it binds directly to 16S rRNA where it helps nucleate assembly of the platform of the 30S subunit by binding and bridging several RNA helices of the 16S rRNA. In terms of biological role, forms an intersubunit bridge (bridge B4) with the 23S rRNA of the 50S subunit in the ribosome. In Halothermothrix orenii (strain H 168 / OCM 544 / DSM 9562), this protein is Small ribosomal subunit protein uS15.